Reading from the N-terminus, the 309-residue chain is Aspartate carbamoyltransferase catalytic subunit (309 aa).

Arginine 57 and threonine 58 together coordinate carbamoyl phosphate. Lysine 86 lines the L-aspartate pocket. Positions 107, 135, and 138 each coordinate carbamoyl phosphate. Residues arginine 168 and arginine 229 each coordinate L-aspartate. Leucine 269 and proline 270 together coordinate carbamoyl phosphate.

The protein belongs to the aspartate/ornithine carbamoyltransferase superfamily. ATCase family. As to quaternary structure, heterooligomer of catalytic and regulatory chains.

It catalyses the reaction carbamoyl phosphate + L-aspartate = N-carbamoyl-L-aspartate + phosphate + H(+). It functions in the pathway pyrimidine metabolism; UMP biosynthesis via de novo pathway; (S)-dihydroorotate from bicarbonate: step 2/3. Its function is as follows. Catalyzes the condensation of carbamoyl phosphate and aspartate to form carbamoyl aspartate and inorganic phosphate, the committed step in the de novo pyrimidine nucleotide biosynthesis pathway. In Methanopyrus kandleri (strain AV19 / DSM 6324 / JCM 9639 / NBRC 100938), this protein is Aspartate carbamoyltransferase catalytic subunit.